A 166-amino-acid polypeptide reads, in one-letter code: Photosystem I assembly protein Ycf3 (166 aa).

TPR repeat units follow at residues 31 to 64 (AFKYYRSGMAAQVDGNYAKALGNYTEALALEEDP), 68 to 101 (SYILYNMGLIFANNGDHEKALDYYHQSLELNPNL), and 116 to 149 (GEQAEEAAELDEAERFFDLAADFWKRAIKIAPNN).

It belongs to the Ycf3 family.

It is found in the cellular thylakoid membrane. Functionally, essential for the assembly of the photosystem I (PSI) complex. May act as a chaperone-like factor to guide the assembly of the PSI subunits. The chain is Photosystem I assembly protein Ycf3 from Acaryochloris marina (strain MBIC 11017).